The chain runs to 1491 residues: Copper-transporting ATPase 1 (1491 aa).

Residues 1–644 are Cytoplasmic-facing; that stretch reads MEPSVDANSI…KREIKQWRGS (644 aa). 2 consecutive HMA domains span residues 8 to 74 and 85 to 151; these read NSIT…FDAL and TNTV…LDMG. Cu(+)-binding residues include Thr-18, Cys-19, and Cys-22. Position 152 is a phosphothreonine (Thr-152). In terms of domain architecture, HMA 3 spans 171–237; that stretch reads VMLKMKVEGM…QIEAVGFPAF (67 aa). Residues Cys-182 and Cys-185 each contribute to the Cu(+) site. A Phosphoserine modification is found at Ser-270. The HMA 4 domain occupies 277-343; that stretch reads STTMFTIEGM…AIEAISPGQY (67 aa). The Cu(+) site is built by Cys-288 and Cys-291. At Thr-327 the chain carries Phosphothreonine. Residues Ser-339, Ser-353, Ser-357, and Ser-362 each carry the phosphoserine modification. HMA domains are found at residues 377 to 443, 479 to 545, and 555 to 621; these read QEAV…FDAA, NKCY…FGAM, and GILE…FEAS. Cu(+) is bound by residues Cys-388, Cys-391, Cys-490, Cys-493, Cys-566, and Cys-569. The chain crosses the membrane as a helical span at residues 645–666; it reads FLVSLFFCIPVMGLMVYMMVMD. At 667 to 705 the chain is on the extracellular side; that stretch reads HHLATLHHNQNMSNEEMINMHSAMFLERQILPGLSIMNL. Asn-677 carries an N-linked (GlcNAc...) asparagine glycan. A helical membrane pass occupies residues 706 to 725; the sequence is LSLLLCLPVQFCGGWYFYIQ. Over 726–732 the chain is Cytoplasmic; sequence AYKALKH. A helical transmembrane segment spans residues 733 to 753; the sequence is KTANMDVLIVLATTIAFAYSL. The Extracellular segment spans residues 754-772; sequence VILLVAMFERAKVNPITFF. Residues 773-793 form a helical membrane-spanning segment; the sequence is DTPPMLFVFIALGRWLEHIAK. At 794 to 926 the chain is on the cytoplasmic side; the sequence is GKTSEALAKL…SKAPIQQFAD (133 aa). The chain crosses the membrane as a helical span at residues 927-950; that stretch reads KLSGYFVPFIVLVSIVTLLVWIII. Topologically, residues 951–980 are extracellular; that stretch reads GFQNFEIVETYFPGYNRSISRTETIIRFAF. N-linked (GlcNAc...) asparagine glycosylation occurs at Asn-966. The chain crosses the membrane as a helical span at residues 981-1002; it reads QASITVLCIACPCSLGLATPTA. Residues 1003 to 1347 lie on the Cytoplasmic side of the membrane; the sequence is VMVGTGVGAQ…LSRKTVKRIR (345 aa). Residue Asp-1035 is the 4-aspartylphosphate intermediate of the active site. Residue Glu-1072 coordinates ATP. Thr-1203 carries the post-translational modification Phosphothreonine. Residues Asp-1292 and Asp-1296 each coordinate Mg(2+). Residues 1348-1365 traverse the membrane as a helical segment; that stretch reads INFVFALIYNLVGIPIAA. The Extracellular segment spans residues 1366–1376; the sequence is GVFLPIGLVLQ. The helical transmembrane segment at 1377 to 1396 threads the bilayer; that stretch reads PWMGSAAMAASSVSVVLSSL. Over 1397–1491 the chain is Cytoplasmic; that stretch reads FLKLYRKPTY…DFREDDDTTL (95 aa). Phosphoserine is present on residues Ser-1421, Ser-1423, Ser-1451, Ser-1454, and Ser-1457. An Endocytosis signal motif is present at residues 1458 to 1459; it reads LL. Phosphoserine occurs at positions 1460, 1464, 1467, and 1477. The PDZD11-binding stretch occupies residues 1477 to 1491; sequence SLLVGDFREDDDTTL. The short motif at 1478 to 1479 is the Endocytosis signal element; sequence LL.

It belongs to the cation transport ATPase (P-type) (TC 3.A.3) family. Type IB subfamily. As to quaternary structure, monomer. Interacts with PDZD11. Interacts with ATOX1 and COMMD1. Interacts with TYRP1. Directly interacts with SOD3; this interaction is copper-dependent and is required for SOD3 activity. As to expression, widely expressed. Highly expressed in pituitary endocrine cells. Expressed in melanocytes (at protein level). Expressed in motor neuron (at protein level). Expressed in hippocampal neuron (at protein level). In the kidney, it is detected in the proximal and distal tubules (at protein level). Expressed in aorta (at protein level).

The protein resides in the golgi apparatus. Its subcellular location is the trans-Golgi network membrane. It localises to the cell membrane. The protein localises to the melanosome membrane. It is found in the early endosome membrane. The protein resides in the cell projection. Its subcellular location is the axon. It localises to the dendrite. The protein localises to the postsynaptic density. The enzyme catalyses Cu(+)(in) + ATP + H2O = Cu(+)(out) + ADP + phosphate + H(+). In terms of biological role, ATP-driven copper (Cu(+)) ion pump that plays an important role in intracellular copper ion homeostasis. Within a catalytic cycle, acquires Cu(+) ion from donor protein on the cytoplasmic side of the membrane and delivers it to acceptor protein on the lumenal side. The transfer of Cu(+) ion across the membrane is coupled to ATP hydrolysis and is associated with a transient phosphorylation that shifts the pump conformation from inward-facing to outward-facing state. Under physiological conditions, at low cytosolic copper concentration, it is localized at the trans-Golgi network (TGN) where it transfers Cu(+) ions to cuproenzymes of the secretory pathway. Upon elevated cytosolic copper concentrations, it relocalizes to the plasma membrane where it is responsible for the export of excess Cu(+) ions. May play a dual role in neuron function and survival by regulating cooper efflux and neuronal transmission at the synapse as well as by supplying Cu(+) ions to enzymes such as PAM, TYR and SOD3. In the melanosomes of pigmented cells, provides copper cofactor to TYR to form an active TYR holoenzyme for melanin biosynthesis. This chain is Copper-transporting ATPase 1, found in Mus musculus (Mouse).